The sequence spans 135 residues: Large ribosomal subunit protein uL16c (135 aa).

This sequence belongs to the universal ribosomal protein uL16 family. Part of the 50S ribosomal subunit.

The protein localises to the plastid. It localises to the chloroplast. This chain is Large ribosomal subunit protein uL16c, found in Daucus carota (Wild carrot).